Consider the following 314-residue polypeptide: Cathepsin L 2 (314 aa).

An N-terminal signal peptide occupies residues Met-1 to Asn-24. Residues Leu-25–Lys-109 constitute a propeptide, activation peptide. Cystine bridges form between Cys-132/Cys-175, Cys-166/Cys-207, and Cys-259/Cys-302. The active site involves Cys-135. Active-site residues include His-265 and Asn-282.

Belongs to the peptidase C1 family.

Its subcellular location is the secreted. The catalysed reaction is Specificity close to that of papain. As compared to cathepsin B, cathepsin L exhibits higher activity toward protein substrates, but has little activity on Z-Arg-Arg-NHMec, and no peptidyl-dipeptidase activity.. Its function is as follows. May be involved in extracellular digestion. The chain is Cathepsin L 2 from Paramecium tetraurelia.